Here is a 758-residue protein sequence, read N- to C-terminus: 5-methyltetrahydropteroyltriglutamate--homocysteine methyltransferase (758 aa).

5-methyltetrahydropteroyltri-L-glutamate is bound by residues 17–20 and Lys117; that span reads RELK. L-homocysteine contacts are provided by residues 434-436 and Glu487; that span reads IGS. L-methionine is bound by residues 434–436 and Glu487; that span reads IGS. 5-methyltetrahydropteroyltri-L-glutamate-binding positions include 518–519 and Trp564; that span reads RC. Residue Asp602 participates in L-homocysteine binding. Asp602 serves as a coordination point for L-methionine. Glu608 provides a ligand contact to 5-methyltetrahydropteroyltri-L-glutamate. 3 residues coordinate Zn(2+): His644, Cys646, and Glu668. Residue His697 is the Proton donor of the active site. A Zn(2+)-binding site is contributed by Cys729.

The protein belongs to the vitamin-B12 independent methionine synthase family. Zn(2+) serves as cofactor.

The enzyme catalyses 5-methyltetrahydropteroyltri-L-glutamate + L-homocysteine = tetrahydropteroyltri-L-glutamate + L-methionine. The protein operates within amino-acid biosynthesis; L-methionine biosynthesis via de novo pathway; L-methionine from L-homocysteine (MetE route): step 1/1. Its function is as follows. Catalyzes the transfer of a methyl group from 5-methyltetrahydrofolate to homocysteine resulting in methionine formation. This Yersinia pestis (strain Pestoides F) protein is 5-methyltetrahydropteroyltriglutamate--homocysteine methyltransferase.